We begin with the raw amino-acid sequence, 244 residues long: Troponin I, cardiac muscle (244 aa).

Positions 1 to 25 (MSDEEEVTYEEEEEEYVEEEEEEVV) are enriched in acidic residues. Positions 1–67 (MSDEEEVTYE…PQVKRKPKIS (67 aa)) are disordered. Residue Ser-2 is modified to N-acetylserine. Ser-2 is modified (phosphoserine; by CK2). Residues 27–42 (PEPPKPAPPPAAPPPL) are compositionally biased toward pro residues.

Belongs to the troponin I family. Binds to actin and tropomyosin. As to expression, heart.

Troponin I is the inhibitory subunit of troponin, the thin filament regulatory complex which confers calcium-sensitivity to striated muscle actomyosin ATPase activity. This is Troponin I, cardiac muscle (tnni3) from Xenopus laevis (African clawed frog).